A 649-amino-acid chain; its full sequence is MDVKTYPVLEAAKNRTLLDNATYLEWYRESVADPEKFWGEHGKRIEWFEPYTKVKNTSFEGDVSIKWFEDGLTNVSYNCIDRHLKTHGEKTAIIWEGDNPYLDKKITYNELYDKVCRLANVLKEQGVKKGDRVTIYMPMIPEAAYAMLACARIGAIHSVVFGGFSPEALAGRIVDCESTFVITCDEGVRGGKPVALKENTDTAIDIAARQHVTVSKVLVVRRTGGKVGWAPGRDLWYHQETAAAEPHCPPEKMNAEDPLFILYTSGSTGKPKGVLHTTGGYLVYASMTHQYVFDYQDGDIYWCTADVGWVTGHSYIVYGPLANAATTLMFEGVPNFPDAGRFWEVVDKHKVNIFYTAPTAIRSLMGAGDDFVKRSSRSSLRLLGTVGEPINPEAWEWYYHVVGDERCPVVDTWWQTETGGILITPLPGATDLKPGSATRPFFGVQPQIVDSDGKVVDGAADGNLCITDSWPGQMRTVYGDHERFIQTYFSTYKGKYFTGDGCRRDEDGYYWITGRVDDVLNVSGHRLGTAEVESALVSHNLVSEAAVVGYPHPIKGQGIYCYVSLMAGEVGDDELRQALVKHVRSEIGPIATPDKIQFAPGLPKTRSGKIMRRILRKIAEDDFGSLGDTSTLADPGVVDDLIANRQNRA.

CoA is bound by residues 189-192 (RGGK), threonine 311, and asparagine 335. Residues 387 to 389 (GEP), 411 to 416 (DTWWQT), aspartate 500, and arginine 515 each bind ATP. Serine 523 contributes to the CoA binding site. Arginine 526 is an ATP binding site. Mg(2+) contacts are provided by valine 537, histidine 539, and valine 542. Residue arginine 584 participates in CoA binding. Lysine 609 is subject to N6-acetyllysine.

The protein belongs to the ATP-dependent AMP-binding enzyme family. Mg(2+) is required as a cofactor. Post-translationally, acetylated. Deacetylation by the SIR2-homolog deacetylase activates the enzyme.

It carries out the reaction acetate + ATP + CoA = acetyl-CoA + AMP + diphosphate. Its function is as follows. Catalyzes the conversion of acetate into acetyl-CoA (AcCoA), an essential intermediate at the junction of anabolic and catabolic pathways. AcsA undergoes a two-step reaction. In the first half reaction, AcsA combines acetate with ATP to form acetyl-adenylate (AcAMP) intermediate. In the second half reaction, it can then transfer the acetyl group from AcAMP to the sulfhydryl group of CoA, forming the product AcCoA. This Rhizobium meliloti (strain 1021) (Ensifer meliloti) protein is Acetyl-coenzyme A synthetase.